The sequence spans 666 residues: DNA mismatch repair protein MutL (666 aa).

This sequence belongs to the DNA mismatch repair MutL/HexB family.

In terms of biological role, this protein is involved in the repair of mismatches in DNA. It is required for dam-dependent methyl-directed DNA mismatch repair. May act as a 'molecular matchmaker', a protein that promotes the formation of a stable complex between two or more DNA-binding proteins in an ATP-dependent manner without itself being part of a final effector complex. This Clostridium botulinum (strain Okra / Type B1) protein is DNA mismatch repair protein MutL.